The primary structure comprises 799 residues: Cadherin-8 (799 aa).

Positions 1–29 are cleaved as a signal peptide; sequence MPERLAETLLDLWTPLIILWITLPSFVYM. Positions 30 to 61 are excised as a propeptide; the sequence is APMNQAHVLTTGSPLELSRQSEEMRILNRSKR. Cadherin domains are found at residues 62–167, 168–276, 277–391, 392–494, and 495–616; these read GWVW…APEF, LNGP…PPKF, AQSL…PPVF, SSPT…DNAP, and EFAS…YVLP. At 62-621 the chain is on the extracellular side; it reads GWVWNQMFVL…PYVLPIGLSM (560 aa). Asn188 carries an N-linked (GlcNAc...) asparagine glycan. Residues Asn463, Asn473, and Asn544 are each glycosylated (N-linked (GlcNAc...) asparagine). A helical transmembrane segment spans residues 622 to 642; the sequence is GALIAILACIILLLVIVVLFV. Topologically, residues 643–799 are cytoplasmic; that stretch reads TLRRHKNEPL…YSVGESDKET (157 aa). A Phosphoserine modification is found at Ser795.

It is found in the cell membrane. Its function is as follows. Cadherins are calcium-dependent cell adhesion proteins. They preferentially interact with themselves in a homophilic manner in connecting cells; cadherins may thus contribute to the sorting of heterogeneous cell types. The chain is Cadherin-8 (Cdh8) from Rattus norvegicus (Rat).